Consider the following 436-residue polypeptide: Methionine aminopeptidase 2 (436 aa).

Residues 1 to 61 (MSEIQPKTEV…KKKKAAPVAS (61 aa)) form a disordered region. Acidic residues predominate over residues 16–26 (EEEEESDDEED). Residues 44 to 56 (KKKKKKNKKKKKA) show a composition bias toward basic residues. His-191 contacts substrate. Asp-211, Asp-222, and His-291 together coordinate a divalent metal cation. His-299 provides a ligand contact to substrate. Glu-324 and Glu-417 together coordinate a divalent metal cation.

The protein belongs to the peptidase M24A family. Methionine aminopeptidase eukaryotic type 2 subfamily. Co(2+) serves as cofactor. Zn(2+) is required as a cofactor. Requires Mn(2+) as cofactor. The cofactor is Fe(2+).

The protein localises to the cytoplasm. The enzyme catalyses Release of N-terminal amino acids, preferentially methionine, from peptides and arylamides.. Functionally, cotranslationally removes the N-terminal methionine from nascent proteins. The N-terminal methionine is often cleaved when the second residue in the primary sequence is small and uncharged (Met-Ala-, Cys, Gly, Pro, Ser, Thr, or Val). This Dictyostelium discoideum (Social amoeba) protein is Methionine aminopeptidase 2 (metap2).